Consider the following 321-residue polypeptide: Sphingolipid delta(4)-desaturase DES1 (321 aa).

The next 6 helical transmembrane spans lie at 41–61 (PNFK…LFVV), 68–88 (WLIV…MLAV), 107–127 (ILGF…FKKY), 157–177 (FGKF…PLII), 187–206 (IINT…FLGW), and 208–230 (PLAY…GHFI).

It belongs to the fatty acid desaturase type 1 family. DEGS subfamily. As to expression, testes.

It is found in the endoplasmic reticulum membrane. The protein resides in the membrane. It localises to the mitochondrion. It catalyses the reaction an N-acylsphinganine + 2 Fe(II)-[cytochrome b5] + O2 + 2 H(+) = an N-acylsphing-4-enine + 2 Fe(III)-[cytochrome b5] + 2 H2O. The enzyme catalyses an N-acyleicosasphinganine + 2 Fe(II)-[cytochrome b5] + O2 + 2 H(+) = an N-acyleicosasphing-4-enine + 2 Fe(III)-[cytochrome b5] + 2 H2O. Its pathway is sphingolipid metabolism. Functionally, has sphingolipid-delta-4-desaturase activity. Converts sphinganine-containing sphingolipids (such as N-acylsphinganines or dihydroceramides) into sphingolipids containing the delta-4-desaturated sphingoid base (E)-sphing-4-enine (such as N-acylsphing-4-enines or ceramides), which are required for many different functions (structural functions as well as signaling). Required to initiate spermatid differentiation among other signals. Required for central spindle assembly and cytokinesis during male meiosis, may act as part of an anchoring mechanism that links membrane-bounded cellular compartments to components of the cytoskeleton. In Drosophila melanogaster (Fruit fly), this protein is Sphingolipid delta(4)-desaturase DES1.